The primary structure comprises 1561 residues: Rho GTPase-activating protein 190 (1561 aa).

4 FF domains span residues 252–320 (YQES…HMKK), 365–419 (YLQN…YLNS), 426–480 (KIGW…HQDD), and 482–547 (IEKS…HLRF). Residues 592-765 (SGSDRTLNLL…EPYPSNHTDL (174 aa)) enclose the pG1 pseudoGTPase domain. One can recognise a pG2 pseudoGTPase domain in the interval 766-926 (RILCCIFCGD…LKTAWDNKYE (161 aa)). Residues serine 973, serine 975, serine 985, serine 988, and serine 996 each carry the phosphoserine modification. Residues 1054–1074 (KIRPKGPSQTLKVGEAPSRNC) are disordered. One can recognise a Rho-GAP domain in the interval 1349–1552 (AQFGKLMITS…TMIDQFPYLF (204 aa)).

Its activity is regulated as follows. Negatively regulated by integrin, bsk and Src/Src64B. GTPase-activating protein (GAP) for RhoA/Rho1 that plays an essential role in the stability of dorsal branches of mushroom body (MB) neurons. The MB neurons are the center for olfactory learning and memory. Acts by converting RhoA/Rho1 to an inactive GDP-bound state, leading to repress the RhoA/Rho1-Drok-MRLC signaling pathway thereby maintaining axon branch stability. The polypeptide is Rho GTPase-activating protein 190 (RhoGAPp190) (Drosophila melanogaster (Fruit fly)).